We begin with the raw amino-acid sequence, 244 residues long: Lytic polysaccharide monooxygenase-like protein ANIA_04702 (244 aa).

A signal peptide spans methionine 1–alanine 23. Residue histidine 24 coordinates Cu(2+). Methylhistidine is present on histidine 24. Residues asparagine 57, asparagine 80, asparagine 118, asparagine 159, asparagine 192, and asparagine 198 are each glycosylated (N-linked (GlcNAc...) asparagine). 2 disulfides stabilise this stretch: cysteine 72/cysteine 177 and cysteine 142/cysteine 196. Asparagine 215 carries GPI-anchor amidated asparagine lipidation. The propeptide at alanine 216–alanine 244 is removed in mature form.

Belongs to the X325 family. The cofactor is Cu(2+). In terms of processing, the catalytically essential N-terminal histidine His-24 is post-translationally modified by methylation to prevent protonation of the histidine side chain, and protect the critical active site of the enzyme from oxidative damage.

The protein localises to the cell membrane. In terms of biological role, lytic polysaccharide monooxygenase-like protein that has diverged to biological functions other than polysaccharide degradation since it does not perform oxidative cleavage of polysaccharides. Acts as a cell surface-bound protein that functions in the copper-accumulation pathway. May also act as the major cell wall sensor that regulates MAP kinase-dependent hyphal anastomosis, the fusion of hyphal cells. The sequence is that of Lytic polysaccharide monooxygenase-like protein ANIA_04702 from Emericella nidulans (strain FGSC A4 / ATCC 38163 / CBS 112.46 / NRRL 194 / M139) (Aspergillus nidulans).